We begin with the raw amino-acid sequence, 357 residues long: Tetraacyldisaccharide 4'-kinase (357 aa).

Position 67–74 (67–74) interacts with ATP; the sequence is SVGGTGKT.

The protein belongs to the LpxK family.

It catalyses the reaction a lipid A disaccharide + ATP = a lipid IVA + ADP + H(+). Its pathway is glycolipid biosynthesis; lipid IV(A) biosynthesis; lipid IV(A) from (3R)-3-hydroxytetradecanoyl-[acyl-carrier-protein] and UDP-N-acetyl-alpha-D-glucosamine: step 6/6. Its function is as follows. Transfers the gamma-phosphate of ATP to the 4'-position of a tetraacyldisaccharide 1-phosphate intermediate (termed DS-1-P) to form tetraacyldisaccharide 1,4'-bis-phosphate (lipid IVA). This is Tetraacyldisaccharide 4'-kinase from Syntrophotalea carbinolica (strain DSM 2380 / NBRC 103641 / GraBd1) (Pelobacter carbinolicus).